The chain runs to 243 residues: PHO85 cyclin-like protein psl1 (243 aa).

The span at 211–224 (ESPISHTPQQNQQD) shows a compositional bias: polar residues. Positions 211–231 (ESPISHTPQQNQQDEQPRRPI) are disordered.

Belongs to the cyclin family. PHO80 subfamily. As to quaternary structure, forms a cyclin-CDK complex with pef1.

It localises to the cytoplasm. The protein localises to the nucleus. Its function is as follows. Cyclin partner of the cyclin-dependent kinase (CDK) pef1 (PHO85 homolog). This is PHO85 cyclin-like protein psl1 (psl1) from Schizosaccharomyces pombe (strain 972 / ATCC 24843) (Fission yeast).